A 222-amino-acid chain; its full sequence is uncharacterized protein (222 aa).

4 consecutive transmembrane segments (helical) span residues F23–L43, I67–L87, I157–V177, and I187–Y207.

This sequence belongs to the DedA family.

It localises to the cell membrane. This is an uncharacterized protein from Mycobacterium leprae (strain TN).